Consider the following 150-residue polypeptide: UPF0178 protein PC1_0756 (150 aa).

It belongs to the UPF0178 family.

This is UPF0178 protein PC1_0756 from Pectobacterium carotovorum subsp. carotovorum (strain PC1).